The following is a 130-amino-acid chain: Small ribosomal subunit protein uS8 (130 aa).

Belongs to the universal ribosomal protein uS8 family. In terms of assembly, part of the 30S ribosomal subunit. Contacts proteins S5 and S12.

Functionally, one of the primary rRNA binding proteins, it binds directly to 16S rRNA central domain where it helps coordinate assembly of the platform of the 30S subunit. The sequence is that of Small ribosomal subunit protein uS8 from Neisseria meningitidis serogroup C (strain 053442).